Reading from the N-terminus, the 268-residue chain is Tryptophan synthase alpha chain (268 aa).

Residues Glu40 and Asp51 each act as proton acceptor in the active site.

Belongs to the TrpA family. Tetramer of two alpha and two beta chains.

It carries out the reaction (1S,2R)-1-C-(indol-3-yl)glycerol 3-phosphate + L-serine = D-glyceraldehyde 3-phosphate + L-tryptophan + H2O. Its pathway is amino-acid biosynthesis; L-tryptophan biosynthesis; L-tryptophan from chorismate: step 5/5. The alpha subunit is responsible for the aldol cleavage of indoleglycerol phosphate to indole and glyceraldehyde 3-phosphate. The protein is Tryptophan synthase alpha chain of Geobacillus kaustophilus (strain HTA426).